A 236-amino-acid polypeptide reads, in one-letter code: Phosphoribosylaminoimidazole-succinocarboxamide synthase (236 aa).

It belongs to the SAICAR synthetase family.

It carries out the reaction 5-amino-1-(5-phospho-D-ribosyl)imidazole-4-carboxylate + L-aspartate + ATP = (2S)-2-[5-amino-1-(5-phospho-beta-D-ribosyl)imidazole-4-carboxamido]succinate + ADP + phosphate + 2 H(+). It functions in the pathway purine metabolism; IMP biosynthesis via de novo pathway; 5-amino-1-(5-phospho-D-ribosyl)imidazole-4-carboxamide from 5-amino-1-(5-phospho-D-ribosyl)imidazole-4-carboxylate: step 1/2. The sequence is that of Phosphoribosylaminoimidazole-succinocarboxamide synthase from Pseudomonas syringae pv. syringae (strain B728a).